Here is a 227-residue protein sequence, read N- to C-terminus: Germin-like protein 3-3 (227 aa).

Positions 1–26 (MECFKTTLAGVVLVVLLLQQAPVLRA) are cleaved as a signal peptide. C36 and C51 are joined by a disulfide. A Cupin type-1 domain is found at 65-217 (SRLATGGDVN…ALRVDAGVVE (153 aa)). N78 and N81 each carry an N-linked (GlcNAc...) asparagine glycan. Mn(2+) is bound by residues H114, H116, E121, and H163.

This sequence belongs to the germin family. As to quaternary structure, oligomer (believed to be a pentamer but probably hexamer).

The protein resides in the secreted. It localises to the extracellular space. It is found in the apoplast. May play a role in plant defense. Probably has no oxalate oxidase activity even if the active site is conserved. The sequence is that of Germin-like protein 3-3 from Oryza sativa subsp. japonica (Rice).